The primary structure comprises 692 residues: Tripartite terminase subunit 1 (692 aa).

The segment at 190 to 218 (CYLCYEELQMTPNNGSSVQKRLNGVLCEH) adopts a C3H1-type zinc-finger fold. 634-641 (YNELYGQR) contributes to the ATP binding site.

The protein belongs to the herpesviridae TRM1 protein family. As to quaternary structure, associates with TRM2 and TRM3 to form the tripartite terminase complex. Interacts with portal protein.

Its subcellular location is the host nucleus. Component of the molecular motor that translocates viral genomic DNA in empty capsid during DNA packaging. Forms a tripartite terminase complex together with TRM2 and TRM3 in the host cytoplasm. Once the complex reaches the host nucleus, it interacts with the capsid portal vertex. This portal forms a ring in which genomic DNA is translocated into the capsid. TRM1 carries an endonuclease activity that plays an important role for the cleavage of concatemeric viral DNA into unit length genomes. The protein is Tripartite terminase subunit 1 of Elephas maximus (Indian elephant).